The primary structure comprises 635 residues: Probable potassium transport system protein Kup (635 aa).

A run of 12 helical transmembrane segments spans residues 20–40 (MALV…SPLY), 62–82 (VLSL…VTII), 111–131 (AYVV…DGVI), 149–169 (PSLH…VFMV), 180–200 (VFGP…IWNI), 223–243 (GWHG…GEAL), 259–279 (WYFF…ALVL), 292–312 (AVPS…AVIA), 349–369 (IYVP…VLIF), 377–397 (VAYG…LALV), 408–428 (WVLP…IANG), and 429–449 (AKLL…FTLM).

This sequence belongs to the HAK/KUP transporter (TC 2.A.72) family.

It is found in the cell inner membrane. The enzyme catalyses K(+)(in) + H(+)(in) = K(+)(out) + H(+)(out). Its function is as follows. Transport of potassium into the cell. Likely operates as a K(+):H(+) symporter. This chain is Probable potassium transport system protein Kup, found in Xanthomonas campestris pv. campestris (strain 8004).